Consider the following 397-residue polypeptide: Decapping and exoribonuclease protein (397 aa).

Basic and acidic residues predominate over residues 1-20; it reads MESRGTKREAGKIEVAEPRN. Residues 1-37 are disordered; sequence MESRGTKREAGKIEVAEPRNKLPRPAPSLPTDPALYS. R58 provides a ligand contact to substrate. Residues 67–88 form a disordered region; sequence LRYYSPPPTNGQSPNFDLRDGY. Residues E101 and 131–133 contribute to the substrate site; that span reads WRG. A Mg(2+)-binding site is contributed by E192. Positions 217 and 234 each coordinate substrate. Mg(2+)-binding residues include E234, D236, E253, and L254. 2 residues coordinate substrate: K255 and Q280. T392 bears the Phosphothreonine mark. At S394 the chain carries Phosphoserine.

Belongs to the DXO/Dom3Z family. Requires Mg(2+) as cofactor.

The protein resides in the nucleus. It carries out the reaction a 5'-end triphospho-ribonucleoside in mRNA + H2O = a 5'-end phospho-ribonucleoside in mRNA + diphosphate + H(+). The catalysed reaction is a 5'-end NAD(+)-phospho-ribonucleoside in mRNA + H2O = a 5'-end phospho-ribonucleoside in mRNA + NAD(+) + H(+). The enzyme catalyses a 5'-end NAD(+)-phospho-ribonucleoside in snoRNA + H2O = a 5'-end phospho-ribonucleoside in snoRNA + NAD(+) + H(+). It catalyses the reaction a 5'-end (N(7)-methyl 5'-triphosphoguanosine)-ribonucleoside-ribonucleotide in mRNA + H2O = a (N(7)-methyl 5'-triphosphoguanosine)-nucleoside + a 5'-end phospho-ribonucleoside in mRNA + H(+). It carries out the reaction a 5'-end FAD-phospho-ribonucleoside in mRNA + H2O = a 5'-end phospho-ribonucleoside in mRNA + FAD + H(+). The catalysed reaction is a 5'-end CoA-ribonucleoside in mRNA + H2O = 3'-dephospho-CoA + a 5'-end phospho-ribonucleoside in mRNA + H(+). Its function is as follows. Decapping enzyme for NAD-capped RNAs: specifically hydrolyzes the nicotinamide adenine dinucleotide (NAD) cap from a subset of RNAs by removing the entire NAD moiety from the 5'-end of an NAD-capped RNA. The NAD-cap is present at the 5'-end of some RNAs and snoRNAs. In contrast to the canonical 5'-end N7 methylguanosine (m7G) cap, the NAD cap promotes mRNA decay. Preferentially acts on NAD-capped transcripts in response to environmental stress. Also acts as a non-canonical decapping enzyme that removes the entire cap structure of m7G capped or incompletely capped RNAs and mediates their subsequent degradation. Specifically degrades pre-mRNAs with a defective 5'-end m7G cap and is part of a pre-mRNA capping quality control. Has decapping activity toward incomplete 5'-end m7G cap mRNAs such as unmethylated 5'-end-capped RNA (cap0), while it has no activity toward 2'-O-ribose methylated m7G cap (cap1). In contrast to canonical decapping enzymes DCP2 and NUDT16, which cleave the cap within the triphosphate linkage, the decapping activity releases the entire cap structure GpppN and a 5'-end monophosphate RNA. Also has 5'-3' exoribonuclease activities: The 5'-end monophosphate RNA is then degraded by the 5'-3' exoribonuclease activity, enabling this enzyme to decap and degrade incompletely capped mRNAs. Also possesses RNA 5'-pyrophosphohydrolase activity by hydrolyzing the 5'-end triphosphate to release pyrophosphates. Exhibits decapping activity towards FAD-capped RNAs. Exhibits decapping activity towards dpCoA-capped RNAs in vitro. This Bos taurus (Bovine) protein is Decapping and exoribonuclease protein.